The primary structure comprises 502 residues: Lysine--tRNA ligase (502 aa).

E410 and E417 together coordinate Mg(2+).

It belongs to the class-II aminoacyl-tRNA synthetase family. Homodimer. It depends on Mg(2+) as a cofactor.

The protein localises to the cytoplasm. It carries out the reaction tRNA(Lys) + L-lysine + ATP = L-lysyl-tRNA(Lys) + AMP + diphosphate. This chain is Lysine--tRNA ligase, found in Photobacterium profundum (strain SS9).